The primary structure comprises 257 residues: UPF0246 protein HAPS_0280 (257 aa).

Belongs to the UPF0246 family.

The sequence is that of UPF0246 protein HAPS_0280 from Glaesserella parasuis serovar 5 (strain SH0165) (Haemophilus parasuis).